A 1423-amino-acid polypeptide reads, in one-letter code: Interphotoreceptor matrix proteoglycan 2 (1423 aa).

The signal sequence occupies residues 1–27 (MFAFLWKISLCLLVLGVITGDPQAVAA). Residues 28–1289 (EEKQAKDASP…EYVSEPLVVG (1262 aa)) lie on the Extracellular side of the membrane. A glycan (N-linked (GlcNAc...) asparagine) is linked at Asn-150. One can recognise an SEA 1 domain in the interval 245–358 (TEQMIEFSIV…NPTVVYTISD (114 aa)). The interval 265 to 273 (SDPDTAKYQ) is hyaluronan-binding motif involved in chondroitin sulfate A-binding. Asn-325 and Asn-375 each carry an N-linked (GlcNAc...) asparagine glycan. Disordered stretches follow at residues 423-469 (AERP…DSEV), 522-559 (DSSD…DYTA), and 577-602 (TKRT…ADSL). Over residues 523–532 (SSDEFEDTGL) the composition is skewed to acidic residues. A compositionally biased stretch (low complexity) spans 537–546 (LLPSSPSSHL). The segment covering 577-587 (TKRTVTAEKEV) has biased composition (basic and acidic residues). Residue Asn-676 is glycosylated (N-linked (GlcNAc...) asparagine). The disordered stretch occupies residues 886–907 (FEVSTDTSTEEQQSLDSSLADR). Polar residues predominate over residues 889–902 (STDTSTEEQQSLDS). In terms of domain architecture, SEA 2 spans 1083-1196 (RALVVFFSLR…YSLDVESGEQ (114 aa)). N-linked (GlcNAc...) asparagine glycosylation is found at Asn-1128, Asn-1142, and Asn-1160. 2 EGF-like domains span residues 1196–1234 (QADP…IDGL) and 1237–1279 (NSIC…EHCE). Disulfide bonds link Cys-1200/Cys-1211, Cys-1205/Cys-1222, Cys-1240/Cys-1253, Cys-1247/Cys-1263, and Cys-1265/Cys-1278. The hyaluronan-binding motif involved in chondroitin sulfate C-binding stretch occupies residues 1266 to 1274 (RVGENWWYR). The helical transmembrane segment at 1290–1310 (IAIASVAGFLLVASAVIFFLA) threads the bilayer. The Cytoplasmic segment spans residues 1311-1423 (RTLRDQYTKS…FVRQHQMKLL (113 aa)). The segment at 1322 to 1327 (TEDSQG) is hyaluronan-binding motif involved in chondroitin sulfate C-binding.

In terms of processing, highly glycosylated (N- and O-linked carbohydrates). In terms of tissue distribution, expressed in retina.

The protein localises to the photoreceptor outer segment membrane. It localises to the photoreceptor inner segment membrane. It is found in the secreted. The protein resides in the extracellular space. Its subcellular location is the extracellular matrix. The protein localises to the interphotoreceptor matrix. In terms of biological role, chondroitin sulfate- and hyaluronan-binding proteoglycan involved in the organization of interphotoreceptor matrix. This is Interphotoreceptor matrix proteoglycan 2 (IMPG2) from Gallus gallus (Chicken).